A 426-amino-acid polypeptide reads, in one-letter code: Serine--tRNA ligase (426 aa).

233–235 is a binding site for L-serine; sequence TSE. An ATP-binding site is contributed by 264–266; it reads RSE. L-serine is bound at residue glutamate 287. ATP is bound at residue 351-354; that stretch reads EISS. Serine 387 is an L-serine binding site.

This sequence belongs to the class-II aminoacyl-tRNA synthetase family. Type-1 seryl-tRNA synthetase subfamily. Homodimer. The tRNA molecule binds across the dimer.

Its subcellular location is the cytoplasm. It catalyses the reaction tRNA(Ser) + L-serine + ATP = L-seryl-tRNA(Ser) + AMP + diphosphate + H(+). The enzyme catalyses tRNA(Sec) + L-serine + ATP = L-seryl-tRNA(Sec) + AMP + diphosphate + H(+). Its pathway is aminoacyl-tRNA biosynthesis; selenocysteinyl-tRNA(Sec) biosynthesis; L-seryl-tRNA(Sec) from L-serine and tRNA(Sec): step 1/1. Its function is as follows. Catalyzes the attachment of serine to tRNA(Ser). Is also able to aminoacylate tRNA(Sec) with serine, to form the misacylated tRNA L-seryl-tRNA(Sec), which will be further converted into selenocysteinyl-tRNA(Sec). The polypeptide is Serine--tRNA ligase (Xylella fastidiosa (strain M23)).